A 1221-amino-acid polypeptide reads, in one-letter code: Deubiquitinating protein VCPIP1 (1221 aa).

Positions methionine 1–alanine 19 are enriched in pro residues. Positions methionine 1–aspartate 40 are disordered. The OTU domain maps to leucine 207–isoleucine 360. Residue aspartate 215 is part of the active site. Cysteine 218 acts as the Nucleophile in catalysis. Histidine 353 is an active-site residue. Residue lysine 407 is modified to N6-acetyllysine. 2 disordered regions span residues serine 724–isoleucine 778 and glutamate 988–glycine 1009. Serine 746 and serine 756 each carry phosphoserine. The span at proline 754–threonine 770 shows a compositional bias: low complexity. Threonine 762 carries the post-translational modification Phosphothreonine. 4 positions are modified to phosphoserine: serine 767, serine 993, serine 997, and serine 1076. Disordered stretches follow at residues alanine 1117–arginine 1177 and arginine 1189–serine 1221. Positions valine 1143–leucine 1156 are enriched in polar residues. Low complexity predominate over residues leucine 1162–threonine 1173. Serine 1197 and serine 1206 each carry phosphoserine. Over residues methionine 1198–aspartate 1208 the composition is skewed to acidic residues. Over residues alanine 1209–serine 1221 the composition is skewed to polar residues.

As to quaternary structure, binds VCP and the ternary complex containing STX5A, NSFL1C and VCP. Phosphorylated at Ser-1206 by ATM or ATR following induction of covalent DNA-protein cross-links (DPCs). In terms of tissue distribution, widely expressed.

It is found in the nucleus. The protein resides in the cytoplasm. The protein localises to the endoplasmic reticulum. It localises to the golgi apparatus. Its subcellular location is the golgi stack. It carries out the reaction Thiol-dependent hydrolysis of ester, thioester, amide, peptide and isopeptide bonds formed by the C-terminal Gly of ubiquitin (a 76-residue protein attached to proteins as an intracellular targeting signal).. In terms of biological role, deubiquitinating enzyme involved in DNA repair and reassembly of the Golgi apparatus and the endoplasmic reticulum following mitosis. Necessary for VCP-mediated reassembly of Golgi stacks after mitosis. Plays a role in VCP-mediated formation of transitional endoplasmic reticulum (tER). Mediates dissociation of the ternary complex containing STX5A, NSFL1C and VCP. Also involved in DNA repair following phosphorylation by ATM or ATR: acts by catalyzing deubiquitination of SPRTN, thereby promoting SPRTN recruitment to chromatin and subsequent proteolytic cleavage of covalent DNA-protein cross-links (DPCs). Hydrolyzes 'Lys-11'- and 'Lys-48'-linked polyubiquitin chains. This Rattus norvegicus (Rat) protein is Deubiquitinating protein VCPIP1.